The following is a 351-amino-acid chain: Phospho-N-acetylmuramoyl-pentapeptide-transferase (351 aa).

A run of 10 helical transmembrane segments spans residues 17 to 37, 62 to 82, 85 to 105, 130 to 150, 158 to 178, 190 to 210, 230 to 250, 254 to 274, 279 to 299, and 328 to 348; these read MAYATIFAFLLSLIVGPYIIL, GIPTMGGILIFFCVFISLVFW, ILNVYFLIMVFVMLGFAFLGF, IIFSFFSVGILYYFGGEHVSV, SFQIDLGLFYIPFGMFILISA, GLAIGLSIVITGALIIIAYLT, LVIFLGALLGGSFGFLWFNAY, IMMGDTGSLALGAILGMAALI, ILFSILAGVFIIETMSVIIQV, and QVVIRFWIIGLIFAIIALSTI.

It belongs to the glycosyltransferase 4 family. MraY subfamily. Requires Mg(2+) as cofactor.

It localises to the cell inner membrane. The enzyme catalyses UDP-N-acetyl-alpha-D-muramoyl-L-alanyl-gamma-D-glutamyl-meso-2,6-diaminopimeloyl-D-alanyl-D-alanine + di-trans,octa-cis-undecaprenyl phosphate = di-trans,octa-cis-undecaprenyl diphospho-N-acetyl-alpha-D-muramoyl-L-alanyl-D-glutamyl-meso-2,6-diaminopimeloyl-D-alanyl-D-alanine + UMP. It participates in cell wall biogenesis; peptidoglycan biosynthesis. Functionally, catalyzes the initial step of the lipid cycle reactions in the biosynthesis of the cell wall peptidoglycan: transfers peptidoglycan precursor phospho-MurNAc-pentapeptide from UDP-MurNAc-pentapeptide onto the lipid carrier undecaprenyl phosphate, yielding undecaprenyl-pyrophosphoryl-MurNAc-pentapeptide, known as lipid I. This Borreliella burgdorferi (strain ATCC 35210 / DSM 4680 / CIP 102532 / B31) (Borrelia burgdorferi) protein is Phospho-N-acetylmuramoyl-pentapeptide-transferase.